A 401-amino-acid chain; its full sequence is NADH-quinone oxidoreductase subunit D 2 (401 aa).

The protein belongs to the complex I 49 kDa subunit family. As to quaternary structure, NDH-1 is composed of 14 different subunits. Subunits NuoB, C, D, E, F, and G constitute the peripheral sector of the complex.

It localises to the cell inner membrane. The catalysed reaction is a quinone + NADH + 5 H(+)(in) = a quinol + NAD(+) + 4 H(+)(out). Functionally, NDH-1 shuttles electrons from NADH, via FMN and iron-sulfur (Fe-S) centers, to quinones in the respiratory chain. The immediate electron acceptor for the enzyme in this species is believed to be ubiquinone. Couples the redox reaction to proton translocation (for every two electrons transferred, four hydrogen ions are translocated across the cytoplasmic membrane), and thus conserves the redox energy in a proton gradient. This is NADH-quinone oxidoreductase subunit D 2 from Koribacter versatilis (strain Ellin345).